An 80-amino-acid chain; its full sequence is Beta-toxin KAaH2 (80 aa).

A signal peptide spans 1-22; sequence MMKLMLFSIIVILFSLIGSIHG. The LCN-type CS-alpha/beta domain maps to 25 to 80; the sequence is VPGNYPLDSSDDTYLCAPLGENPSCIQICRKHGVKYGYCYAFQCWCEYLEDKNVKI. 3 cysteine pairs are disulfide-bonded: Cys-40–Cys-63, Cys-49–Cys-68, and Cys-53–Cys-70.

The protein belongs to the long (3 C-C) scorpion toxin superfamily. Sodium/Potassium channel inhibitor family. As to expression, expressed by the venom gland.

Its subcellular location is the secreted. Weakly inhibits the vertebrate potassium channel Kv1.1/KCNA1. This is Beta-toxin KAaH2 from Androctonus australis (Sahara scorpion).